The chain runs to 32 residues: Calcitonin (32 aa).

Cys-1 and Cys-7 are joined by a disulfide. The residue at position 32 (Pro-32) is a Proline amide.

It belongs to the calcitonin family.

The protein resides in the secreted. Calcitonin is a peptide hormone that causes a rapid but short-lived drop in the level of calcium and phosphate in blood by promoting the incorporation of those ions in the bones. Calcitonin function is mediated by the calcitonin receptor/CALCR and the CALCR-RAMP2 (AMYR2) receptor complex. This is Calcitonin (CALCA) from Bos taurus (Bovine).